Reading from the N-terminus, the 337-residue chain is Glyceraldehyde-3-phosphate dehydrogenase (337 aa).

NAD(+) contacts are provided by residues 12-13 (RI), Asp34, and Lys79. Residues 150–152 (SCT), Thr181, 210–211 (TG), and Arg233 each bind D-glyceraldehyde 3-phosphate. Cys151 serves as the catalytic Nucleophile. Asn315 contacts NAD(+).

It belongs to the glyceraldehyde-3-phosphate dehydrogenase family. In terms of assembly, homotetramer.

The protein localises to the cytoplasm. The catalysed reaction is D-glyceraldehyde 3-phosphate + phosphate + NAD(+) = (2R)-3-phospho-glyceroyl phosphate + NADH + H(+). Its pathway is carbohydrate degradation; glycolysis; pyruvate from D-glyceraldehyde 3-phosphate: step 1/5. The protein is Glyceraldehyde-3-phosphate dehydrogenase (GPD1) of Cochliobolus heterostrophus (Southern corn leaf blight fungus).